A 473-amino-acid polypeptide reads, in one-letter code: Exodeoxyribonuclease I (473 aa).

The region spanning 9 to 188 (IYDYESFGVN…AMADVYATIA (180 aa)) is the Exonuclease domain. Residues Asp-11, Glu-13, and Asp-182 each contribute to the Mg(2+) site. Glu-13 contributes to the substrate binding site. One can recognise an ExoI SH3-like domain in the interval 198 to 353 (PKLFQYFFEN…KVADIFNEER (156 aa)). The region spanning 356–472 (ASNDNVETEL…QVYEYGIKLL (117 aa)) is the ExoI C-terminal domain.

Monomer. Interacts with ssb (via C-terminus); this interaction stimulates the exonuclease activity by recruiting the enzyme to its substrate. Mg(2+) is required as a cofactor.

It carries out the reaction Exonucleolytic cleavage in the 3'- to 5'-direction to yield nucleoside 5'-phosphates.. Its function is as follows. Degrades single-stranded DNA (ssDNA) in a highly processive manner. Also functions as a DNA deoxyribophosphodiesterase that releases deoxyribose-phosphate moieties following the cleavage of DNA at an apurinic/apyrimidinic (AP) site by either an AP endonuclease or AP lyase. Involved in genome maintenance but probably not in phase variation, which contributes to the virulence and disease. The protein is Exodeoxyribonuclease I (sbcB) of Haemophilus influenzae (strain ATCC 51907 / DSM 11121 / KW20 / Rd).